Consider the following 467-residue polypeptide: Na(+)-translocating NADH-quinone reductase subunit A (467 aa).

This sequence belongs to the NqrA family. Composed of six subunits; NqrA, NqrB, NqrC, NqrD, NqrE and NqrF.

It carries out the reaction a ubiquinone + n Na(+)(in) + NADH + H(+) = a ubiquinol + n Na(+)(out) + NAD(+). Its function is as follows. NQR complex catalyzes the reduction of ubiquinone-1 to ubiquinol by two successive reactions, coupled with the transport of Na(+) ions from the cytoplasm to the periplasm. NqrA to NqrE are probably involved in the second step, the conversion of ubisemiquinone to ubiquinol. In Chlamydia pneumoniae (Chlamydophila pneumoniae), this protein is Na(+)-translocating NADH-quinone reductase subunit A.